The sequence spans 505 residues: Maturase K (505 aa).

It belongs to the intron maturase 2 family. MatK subfamily.

It localises to the plastid. The protein localises to the chloroplast. Its function is as follows. Usually encoded in the trnK tRNA gene intron. Probably assists in splicing its own and other chloroplast group II introns. The protein is Maturase K of Ulmus parvifolia (Chinese elm).